The following is a 257-amino-acid chain: UPF0246 protein PC1_3665 (257 aa).

It belongs to the UPF0246 family.

This Pectobacterium carotovorum subsp. carotovorum (strain PC1) protein is UPF0246 protein PC1_3665.